A 125-amino-acid polypeptide reads, in one-letter code: MADLSNLVEQLSSLTVLEAAELSKLLEEKWGVSAAAPVAVAAAPAAGAAAAPAEEQTEFTVILAKAGDKKINVIKEIRTITGLGLKEAKDLVEGAPKTVKEGVNKDEAEKIKKVLEEQGAAVEIK.

The protein belongs to the bacterial ribosomal protein bL12 family. In terms of assembly, homodimer. Part of the ribosomal stalk of the 50S ribosomal subunit. Forms a multimeric L10(L12)X complex, where L10 forms an elongated spine to which 2 to 4 L12 dimers bind in a sequential fashion. Binds GTP-bound translation factors.

Forms part of the ribosomal stalk which helps the ribosome interact with GTP-bound translation factors. Is thus essential for accurate translation. The chain is Large ribosomal subunit protein bL12 from Granulibacter bethesdensis (strain ATCC BAA-1260 / CGDNIH1).